The primary structure comprises 37 residues: Trypsin inhibitor 3 (37 aa).

3 disulfide bridges follow: C4–C21, C11–C25, and C20–C36.

Functionally, trypsin inhibitor. This is Trypsin inhibitor 3 from Spinacia oleracea (Spinach).